A 487-amino-acid chain; its full sequence is GTPase Der (487 aa).

EngA-type G domains follow at residues 3 to 166 (PVIA…IAEL) and 201 to 374 (VKLA…ESAT). Residues 9-16 (GRPNVGKS), 56-60 (DTGGI), 118-121 (NKTD), 207-214 (GRPNVGKS), 254-258 (DTAGV), and 319-322 (NKWD) each bind GTP. One can recognise a KH-like domain in the interval 375-459 (KRISTAMLRR…PIKIEFREGD (85 aa)).

Belongs to the TRAFAC class TrmE-Era-EngA-EngB-Septin-like GTPase superfamily. EngA (Der) GTPase family. As to quaternary structure, associates with the 50S ribosomal subunit.

Functionally, GTPase that plays an essential role in the late steps of ribosome biogenesis. The chain is GTPase Der from Pseudoalteromonas translucida (strain TAC 125).